A 132-amino-acid chain; its full sequence is Small ribosomal subunit protein bS6 (132 aa).

A disordered region spans residues 94–132 (DAVTEESQLAKNADEKRARKATTRRPDRDDSDDNDHSED). Acidic residues predominate over residues 122-132 (DDSDDNDHSED).

The protein belongs to the bacterial ribosomal protein bS6 family.

In terms of biological role, binds together with bS18 to 16S ribosomal RNA. The sequence is that of Small ribosomal subunit protein bS6 from Psychrobacter arcticus (strain DSM 17307 / VKM B-2377 / 273-4).